The chain runs to 60 residues: Large ribosomal subunit protein uL30 (60 aa).

It belongs to the universal ribosomal protein uL30 family. In terms of assembly, part of the 50S ribosomal subunit.

This Bacillus anthracis (strain A0248) protein is Large ribosomal subunit protein uL30.